Here is a 92-residue protein sequence, read N- to C-terminus: Large ribosomal subunit protein eL43 (92 aa).

Residues 39–60 (CQFCGKDAMKRQAVGIWGCKSC) form a C4-type zinc finger.

The protein belongs to the eukaryotic ribosomal protein eL43 family.

The sequence is that of Large ribosomal subunit protein eL43 (RPL37A) from Cryptochiton stelleri (Giant gumboot chiton).